The following is a 368-amino-acid chain: DNA replication and repair protein RecF (368 aa).

ATP is bound at residue 30–37 (GKNGTGKT).

This sequence belongs to the RecF family.

The protein resides in the cytoplasm. In terms of biological role, the RecF protein is involved in DNA metabolism; it is required for DNA replication and normal SOS inducibility. RecF binds preferentially to single-stranded, linear DNA. It also seems to bind ATP. The sequence is that of DNA replication and repair protein RecF from Chloroherpeton thalassium (strain ATCC 35110 / GB-78).